Reading from the N-terminus, the 114-residue chain is Probable non-functional T cell receptor beta variable 5-7 (114 aa).

The signal sequence occupies residues 1–21 (MGPGLLCWVLLCPLGEGPVDA). Residues 22–114 (GVTQSPTHLI…SALYLCASSL (93 aa)) enclose the Ig-like domain. A disulfide bond links C42 and C110. N90 carries an N-linked (GlcNAc...) asparagine glycan.

In terms of assembly, alpha-beta TR is a heterodimer composed of an alpha and beta chain; disulfide-linked. The alpha-beta TR is associated with the transmembrane signaling CD3 coreceptor proteins to form the TR-CD3 (TcR or TCR). The assembly of alpha-beta TR heterodimers with CD3 occurs in the endoplasmic reticulum where a single alpha-beta TR heterodimer associates with one CD3D-CD3E heterodimer, one CD3G-CD3E heterodimer and one CD247 homodimer forming a stable octameric structure. CD3D-CD3E and CD3G-CD3E heterodimers preferentially associate with TR alpha and TR beta chains, respectively. The association of the CD247 homodimer is the last step of TcR assembly in the endoplasmic reticulum and is required for transport to the cell surface.

Its subcellular location is the cell membrane. Probable non-functional open reading frame (ORF) of V region of the variable domain of T cell receptor (TR) beta chain. Non-functional ORF generally cannot participate in the synthesis of a productive T cell receptor (TR) chain due to altered V-(D)-J or switch recombination and/or splicing site (at mRNA level) and/or conserved amino acid change (protein level). Alpha-beta T cell receptors are antigen specific receptors which are essential to the immune response and are present on the cell surface of T lymphocytes. Recognize peptide-major histocompatibility (MH) (pMH) complexes that are displayed by antigen presenting cells (APC), a prerequisite for efficient T cell adaptive immunity against pathogens. Binding of alpha-beta TR to pMH complex initiates TR-CD3 clustering on the cell surface and intracellular activation of LCK that phosphorylates the ITAM motifs of CD3G, CD3D, CD3E and CD247 enabling the recruitment of ZAP70. In turn ZAP70 phosphorylates LAT, which recruits numerous signaling molecules to form the LAT signalosome. The LAT signalosome propagates signal branching to three major signaling pathways, the calcium, the mitogen-activated protein kinase (MAPK) kinase and the nuclear factor NF-kappa-B (NF-kB) pathways, leading to the mobilization of transcription factors that are critical for gene expression and essential for T cell growth and differentiation. The T cell repertoire is generated in the thymus, by V-(D)-J rearrangement. This repertoire is then shaped by intrathymic selection events to generate a peripheral T cell pool of self-MH restricted, non-autoaggressive T cells. Post-thymic interaction of alpha-beta TR with the pMH complexes shapes TR structural and functional avidity. This chain is Probable non-functional T cell receptor beta variable 5-7, found in Homo sapiens (Human).